The primary structure comprises 175 residues: Short chain dehydrogenase/reductase dpmpG (175 aa).

The NADP(+) site is built by Ile-18, Asp-71, Asn-98, and Lys-132.

Belongs to the short-chain dehydrogenases/reductases (SDR) family.

It functions in the pathway secondary metabolite biosynthesis; terpenoid biosynthesis. Functionally, short chain dehydrogenase/reductase; part of the gene cluster that mediates the biosynthesis of diterpenoid pyrones. The first step of the pathway is the synthesis of the alpha-pyrone moiety by the polyketide synthase dpmpA via condensation of one acetyl-CoA starter unit with 3 malonyl-CoA units and 2 methylations. The alpha-pyrone is then combined with geranylgeranyl pyrophosphate (GGPP) formed by the GGPP synthase dpmpD through the action of the prenyltransferase dpmpC to yield a linear alpha-pyrone diterpenoid. Subsequent steps in the diterpenoid pyrone biosynthetic pathway involve the decalin core formation, which is initiated by the epoxidation of the C10-C11 olefin by the FAD-dependent oxidoreductase dpmpE, and is followed by a cyclization cascade catalyzed by the terpene cyclase dpmpB. The short chain dehydrogenase/reductase dpmpG then oxidizes the 8S hydroxy group to a ketone and the short chain dehydrogenase/reductase dpmpH reduces the ketone to the 8R hydroxy group to yield higginsianin B. Higginsianin B is further methylated by the methyltransferase dpmpI to produce the intermediate named FDDP B. The cytochrome P450 monooxygenase dpmpJ then oxidizes the C-26 methyl to primary alcohol, producing the final diterpenoid pyrone with a C-26 primary alcohol on the gamma-pyrone moiety named FDDP C. The sequence is that of Short chain dehydrogenase/reductase dpmpG from Macrophomina phaseolina (strain MS6) (Charcoal rot fungus).